A 166-amino-acid chain; its full sequence is Dynein regulatory complex protein 8 (166 aa).

Residues 95-130 (DDYHTLLRAFRAFDPDGRGFIDAESFKSLLTGKGEA) enclose the EF-hand domain.

Belongs to the DRC8 family. As to quaternary structure, component of the nexin-dynein regulatory complex (N-DRC).

It is found in the cytoplasm. The protein localises to the cytoskeleton. The protein resides in the flagellum axoneme. In terms of biological role, component of the nexin-dynein regulatory complex (N-DRC), a key regulator of ciliary/flagellar motility which maintains the alignment and integrity of the distal axoneme and regulates microtubule sliding in motile axonemes. The sequence is that of Dynein regulatory complex protein 8 from Chlamydomonas reinhardtii (Chlamydomonas smithii).